The sequence spans 224 residues: Abasic site processing protein YoqW (224 aa).

The Nucleophile role is filled by cysteine 2. Cysteine 2 carries the post-translational modification Thiazolidine linkage to a ring-opened DNA abasic site. Glutamate 106 is a catalytic residue.

This sequence belongs to the SOS response-associated peptidase family.

Formation and reversal of DNA-protein cross-link depends on DNA context. Catalyzes formation of the thiazolidine linkage in presence of abasic sites in single-stranded DNA. Mediates the reversal of the thiazolidine cross-link in presence of double stranded DNA. In terms of biological role, sensor of abasic sites in single-stranded DNA (ssDNA) required to preserve genome integrity by promoting error-free repair of abasic sites. Recognizes and binds abasic sites in ssDNA at replication forks and chemically modifies the lesion by forming a covalent cross-link with DNA: forms a stable thiazolidine linkage between a ring-opened abasic site and the alpha-amino and sulfhydryl substituents of its N-terminal catalytic cysteine residue. The DNA-protein cross-link is then reversed: able to catalyze the reversal of the thiazolidine cross-link and cycle between a cross-link and a non-cross-linked state depending on DNA context: mediates self-reversal of the thiazolidine cross-link in double stranded DNA. May act as a protease: mediates autocatalytic processing of its N-terminal methionine in order to expose the catalytic cysteine. The chain is Abasic site processing protein YoqW (yoqW) from Bacillus subtilis (strain 168).